The primary structure comprises 105 residues: Large ribosomal subunit protein uL24 (105 aa).

It belongs to the universal ribosomal protein uL24 family. As to quaternary structure, part of the 50S ribosomal subunit.

Functionally, one of two assembly initiator proteins, it binds directly to the 5'-end of the 23S rRNA, where it nucleates assembly of the 50S subunit. One of the proteins that surrounds the polypeptide exit tunnel on the outside of the subunit. This Clostridium kluyveri (strain ATCC 8527 / DSM 555 / NBRC 12016 / NCIMB 10680 / K1) protein is Large ribosomal subunit protein uL24.